A 159-amino-acid polypeptide reads, in one-letter code: Ribosomal RNA large subunit methyltransferase H (159 aa).

Residues Leu-76, Gly-108, and 127–132 each bind S-adenosyl-L-methionine; that span reads MSKMTF.

Belongs to the RNA methyltransferase RlmH family. Homodimer.

It is found in the cytoplasm. The enzyme catalyses pseudouridine(1915) in 23S rRNA + S-adenosyl-L-methionine = N(3)-methylpseudouridine(1915) in 23S rRNA + S-adenosyl-L-homocysteine + H(+). Functionally, specifically methylates the pseudouridine at position 1915 (m3Psi1915) in 23S rRNA. The polypeptide is Ribosomal RNA large subunit methyltransferase H (Ureaplasma parvum serovar 3 (strain ATCC 27815 / 27 / NCTC 11736)).